A 248-amino-acid polypeptide reads, in one-letter code: 5'-nucleotidase SurE (248 aa).

4 residues coordinate a divalent metal cation: Asp-8, Asp-9, Ser-39, and Asn-91.

This sequence belongs to the SurE nucleotidase family. A divalent metal cation serves as cofactor.

The protein resides in the cytoplasm. It carries out the reaction a ribonucleoside 5'-phosphate + H2O = a ribonucleoside + phosphate. Functionally, nucleotidase that shows phosphatase activity on nucleoside 5'-monophosphates. The polypeptide is 5'-nucleotidase SurE (Neisseria meningitidis serogroup B (strain ATCC BAA-335 / MC58)).